The sequence spans 394 residues: MPAPLFLSGSCEVCGDKTSGRHFGVMSCRACAAFFRRAATWNLEKRICPNGTCHTSVNGKFNCKQCRLKKCLDVGMDTRRFQTDRDLISCSAISQSLATFLGRPEFILCCEPDRASVLKTTIDVTRLVNIARDMLQKPTNHVLPSNSLEQLATTLDNMRCVESNKEVKFIEKYGKVETLKSWEQGFLRVVEWFSNFSEFRELNERLKLEIVKSCWFSWTRLDKLSETANKQINKMLGKSQLMVGNGACMNMNNFEIDLSWCTNYSLEQLKYFFQTPNGKKNFQQSIQDMIDLNPSSIEVSYMLLHLSLEHAGKRLHGDALDATENLVQVQANNLHKYYVEKLKLANYSSRLTQLMRITRTLEADIRIRIEKKQIADVFNIMKIDFSHPEMFEAT.

A DNA-binding region (nuclear receptor) is located at residues 8 to 83; that stretch reads SGSCEVCGDK…VGMDTRRFQT (76 aa). 2 consecutive NR C4-type zinc fingers follow at residues 11–31 and 48–71; these read CEVC…CRAC and CPNG…LKKC. The region spanning 134–394 is the NR LBD domain; the sequence is MLQKPTNHVL…FSHPEMFEAT (261 aa).

Belongs to the nuclear hormone receptor family.

The protein resides in the nucleus. Its function is as follows. Orphan nuclear receptor. The sequence is that of Nuclear hormone receptor family member nhr-18 (nhr-18) from Caenorhabditis elegans.